The sequence spans 254 residues: Chymotrypsin-like serine proteinase (254 aa).

The N-terminal stretch at M1 to A18 is a signal peptide. Residues E19 to N23 constitute a propeptide, activation peptide. The region spanning I24 to Q254 is the Peptidase S1 domain. C53 and C69 are oxidised to a cystine. Active-site charge relay system residues include H68 and D117. 3 disulfides stabilise this stretch: C146–C218, C181–C199, and C208–C233. S212 serves as the catalytic Charge relay system.

It belongs to the peptidase S1 family. In terms of assembly, monomer. In terms of tissue distribution, expressed specifically in the distal quarter of the intestine.

It localises to the secreted. It is found in the extracellular space. Its activity is regulated as follows. Activated by an autocatalytic mechanism. Functionally, specificity similar to chymotrypsin. This Haliotis rufescens (California red abalone) protein is Chymotrypsin-like serine proteinase.